Consider the following 286-residue polypeptide: Pantothenate synthetase (286 aa).

Residue 30-37 coordinates ATP; the sequence is MGNLHEGH. H37 functions as the Proton donor in the catalytic mechanism. A (R)-pantoate-binding site is contributed by Q64. A beta-alanine-binding site is contributed by Q64. 151–154 provides a ligand contact to ATP; the sequence is GKKD. Residue Q157 participates in (R)-pantoate binding. ATP-binding positions include L180 and 188 to 191; that span reads LSSR.

Belongs to the pantothenate synthetase family. As to quaternary structure, homodimer.

It is found in the cytoplasm. The enzyme catalyses (R)-pantoate + beta-alanine + ATP = (R)-pantothenate + AMP + diphosphate + H(+). The protein operates within cofactor biosynthesis; (R)-pantothenate biosynthesis; (R)-pantothenate from (R)-pantoate and beta-alanine: step 1/1. In terms of biological role, catalyzes the condensation of pantoate with beta-alanine in an ATP-dependent reaction via a pantoyl-adenylate intermediate. The polypeptide is Pantothenate synthetase (Leptothrix cholodnii (strain ATCC 51168 / LMG 8142 / SP-6) (Leptothrix discophora (strain SP-6))).